The following is a 411-amino-acid chain: Translation initiation factor 2 subunit gamma (411 aa).

The 195-residue stretch at 9–203 folds into the tr-type G domain; that stretch reads QAEVNIGMVG…AIEDFIPTPK (195 aa). The G1 stretch occupies residues 18–25; the sequence is GHVDHGKT. The Mg(2+) site is built by aspartate 21, threonine 25, glycine 46, and threonine 48. 21-26 is a GTP binding site; that stretch reads DHGKTT. The tract at residues 46-50 is G2; sequence GITIK. 4 residues coordinate Zn(2+): cysteine 61, cysteine 64, cysteine 73, and cysteine 76. The G3 stretch occupies residues 90–93; it reads DAPG. GTP is bound by residues 146-149 and 181-183; these read NKIE and SAL. The G4 stretch occupies residues 146–149; sequence NKIE. Residues 181-183 are G5; the sequence is SAL.

Belongs to the TRAFAC class translation factor GTPase superfamily. Classic translation factor GTPase family. EIF2G subfamily. In terms of assembly, heterotrimer composed of an alpha, a beta and a gamma chain. Mg(2+) is required as a cofactor.

The catalysed reaction is GTP + H2O = GDP + phosphate + H(+). Its function is as follows. eIF-2 functions in the early steps of protein synthesis by forming a ternary complex with GTP and initiator tRNA. This chain is Translation initiation factor 2 subunit gamma, found in Pyrococcus abyssi (strain GE5 / Orsay).